The following is a 501-amino-acid chain: ATP synthase subunit alpha (501 aa).

Position 169–176 (169–176) interacts with ATP; that stretch reads GDRQTGKT.

Belongs to the ATPase alpha/beta chains family. As to quaternary structure, F-type ATPases have 2 components, CF(1) - the catalytic core - and CF(0) - the membrane proton channel. CF(1) has five subunits: alpha(3), beta(3), gamma(1), delta(1), epsilon(1). CF(0) has three main subunits: a(1), b(2) and c(9-12). The alpha and beta chains form an alternating ring which encloses part of the gamma chain. CF(1) is attached to CF(0) by a central stalk formed by the gamma and epsilon chains, while a peripheral stalk is formed by the delta and b chains.

Its subcellular location is the cell membrane. It catalyses the reaction ATP + H2O + 4 H(+)(in) = ADP + phosphate + 5 H(+)(out). Its function is as follows. Produces ATP from ADP in the presence of a proton gradient across the membrane. The alpha chain is a regulatory subunit. This Streptococcus pneumoniae (strain 70585) protein is ATP synthase subunit alpha.